The chain runs to 908 residues: Flap endonuclease GEN homolog 1 (908 aa).

Residues 2–96 (GVNDLWQILE…SKRNQSRYGS (95 aa)) are XPG-N domain. Residues aspartate 30, glutamate 75, glutamate 134, glutamate 136, aspartate 155, aspartate 157, and aspartate 208 each contribute to the Mg(2+) site. Positions 122–208 (ECLGIPWVQA…VGLAILLGCD (87 aa)) are XPG-I domain. The 5'-3' exonuclease domain stretch occupies residues 208–384 (DYLPKGVPGV…LLVLLTHYDM (177 aa)). Residues 390–464 (GSRNSNQLQP…VYQKQKLEIK (75 aa)) are chromodomain. A phosphoserine mark is found at serine 801 and serine 802.

This sequence belongs to the XPG/RAD2 endonuclease family. GEN subfamily. Largely monomeric, dimerizes on the Holliday junction and the first nick occurs upon dimerization at the junction. Requires Mg(2+) as cofactor.

It localises to the nucleus. Functionally, endonuclease which resolves Holliday junctions (HJs) by the introduction of symmetrically related cuts across the junction point, to produce nicked duplex products in which the nicks can be readily ligated. Four-way DNA intermediates, also known as Holliday junctions, are formed during homologous recombination and DNA repair, and their resolution is necessary for proper chromosome segregation. Cleaves HJs by a nick and counter-nick mechanism involving dual coordinated incisions that lead to the formation of ligatable nicked duplex products. Cleavage of the first strand is rate limiting, while second strand cleavage is rapid. Largely monomeric, dimerizes on the HJ and the first nick occurs upon dimerization at the junction. Efficiently cleaves both single and double HJs contained within large recombination intermediates. Exhibits a weak sequence preference for incision between two G residues that reside in a T-rich region of DNA. Also has endonuclease activity on 5'-flap and replication fork (RF) DNA substrates. This Homo sapiens (Human) protein is Flap endonuclease GEN homolog 1 (GEN1).